The following is a 198-amino-acid chain: 3-isopropylmalate dehydratase small subunit (198 aa).

Belongs to the LeuD family. LeuD type 1 subfamily. Heterodimer of LeuC and LeuD.

The enzyme catalyses (2R,3S)-3-isopropylmalate = (2S)-2-isopropylmalate. Its pathway is amino-acid biosynthesis; L-leucine biosynthesis; L-leucine from 3-methyl-2-oxobutanoate: step 2/4. Catalyzes the isomerization between 2-isopropylmalate and 3-isopropylmalate, via the formation of 2-isopropylmaleate. The polypeptide is 3-isopropylmalate dehydratase small subunit (Colwellia psychrerythraea (strain 34H / ATCC BAA-681) (Vibrio psychroerythus)).